The primary structure comprises 474 residues: Trichothecene 3-O-acetyltransferase (474 aa).

The protein belongs to the trichothecene 3-O-acetyltransferase family.

Functionally, trichothecene 3-O-acetyltransferase involved in self-protection against trichothecenes, mycotoxins acting as eukaryotic protein synthesis inhibitors. Its existence is surprising in a non-trichothecene producer organism which needs no self-protection again endogenic trichothecenes. The persistence of this non-essential gene may be due to a selective advantage that it may confer, like a resistance to exogenic trichothecenes. This Saccharomyces cerevisiae (strain ATCC 204508 / S288c) (Baker's yeast) protein is Trichothecene 3-O-acetyltransferase (AYT1).